The primary structure comprises 441 residues: Mitochondrial distribution and morphology protein 12 (441 aa).

Residues M1–V441 enclose the SMP-LTD domain. The interval T180–E289 is disordered. Composition is skewed to polar residues over residues S226–T245 and S253–G263.

This sequence belongs to the MDM12 family. In terms of assembly, component of the ER-mitochondria encounter structure (ERMES) or MDM complex, composed of MMM1, MDM10, MDM12 and MDM34. An MMM1 homodimer associates with one molecule of MDM12 on each side in a pairwise head-to-tail manner, and the SMP-LTD domains of MMM1 and MDM12 generate a continuous hydrophobic tunnel for phospholipid trafficking.

Its subcellular location is the mitochondrion outer membrane. It localises to the endoplasmic reticulum membrane. Component of the ERMES/MDM complex, which serves as a molecular tether to connect the endoplasmic reticulum (ER) and mitochondria. Components of this complex are involved in the control of mitochondrial shape and protein biogenesis, and function in nonvesicular lipid trafficking between the ER and mitochondria. MDM12 is required for the interaction of the ER-resident membrane protein MMM1 and the outer mitochondrial membrane-resident beta-barrel protein MDM10. The MDM12-MMM1 subcomplex functions in the major beta-barrel assembly pathway that is responsible for biogenesis of all mitochondrial outer membrane beta-barrel proteins, and acts in a late step after the SAM complex. The MDM10-MDM12-MMM1 subcomplex further acts in the TOM40-specific pathway after the action of the MDM12-MMM1 complex. Essential for establishing and maintaining the structure of mitochondria and maintenance of mtDNA nucleoids. This chain is Mitochondrial distribution and morphology protein 12, found in Paracoccidioides brasiliensis (strain Pb18).